A 198-amino-acid chain; its full sequence is Recombination protein RecR (198 aa).

The C4-type zinc-finger motif lies at 59 to 74; the sequence is CSLCCNYTDHDPCPIC. The Toprim domain maps to 82 to 175; it reads TLLCIVEQPR…KVTRIAHGLP (94 aa).

Belongs to the RecR family.

Its function is as follows. May play a role in DNA repair. It seems to be involved in an RecBC-independent recombinational process of DNA repair. It may act with RecF and RecO. The chain is Recombination protein RecR from Desulfitobacterium hafniense (strain DSM 10664 / DCB-2).